The sequence spans 234 residues: Golgi SNAP receptor complex member 1 (234 aa).

The Cytoplasmic portion of the chain corresponds to 1 to 212 (MSETWEALRK…MQKIKTKKQK (212 aa)). Residues 54–121 (VTTEIEGLIE…RDNVDQVLQR (68 aa)) are a coiled coil. Residues 213–233 (NTMILAGVISACLIFTIFWII) form a helical; Anchor for type IV membrane protein membrane-spanning segment. A topological domain (vesicular) is located at residue asparagine 234.

This sequence belongs to the GOSR1 family. In terms of assembly, component of several multiprotein Golgi SNARE complexes.

Its subcellular location is the golgi apparatus membrane. Its function is as follows. Involved in transport from the ER to the Golgi apparatus as well as in intra-Golgi transport. It belongs to a super-family of proteins called t-SNAREs or soluble NSF (N-ethylmaleimide-sensitive factor) attachment protein receptor. Cooperates with ykt-6 for proper expression of Golgi-resident proteins. Required along with ykt-6 for normal embryonic development, seam cell division or differentiation, and ray formation. The chain is Golgi SNAP receptor complex member 1 from Caenorhabditis briggsae.